A 760-amino-acid chain; its full sequence is Complement C2 (760 aa).

The first 18 residues, Met1–Ala18, serve as a signal peptide directing secretion. 3 consecutive Sushi domains span residues Leu20 to Lys90, Val92 to Asn151, and Ser154 to Gln212. 6 cysteine pairs are disulfide-bonded: Cys22–Cys62, Cys49–Cys89, Cys94–Cys136, Cys122–Cys149, Cys156–Cys197, and Cys182–Cys210. N-linked (GlcNAc...) asparagine glycans are attached at residues Asn27 and Asn32. N-linked (GlcNAc...) asparagine glycosylation is present at Asn117. A VWFA domain is found at Asn261–Met459. The short motif at Asp267–Ser271 is the MIDAS-like motif element. Ser269 and Ser271 together coordinate Mg(2+). N-linked (GlcNAc...) asparagine glycosylation is found at Asn297 and Asn340. Thr344 serves as a coordination point for Mg(2+). Intrachain disulfides connect Cys470-Cys590, Cys499-Cys515, Cys593-Cys609, Cys647-Cys674, and Cys685-Cys715. In terms of domain architecture, Peptidase S1 spans Gly471 to Asp752. N-linked (GlcNAc...) asparagine glycans are attached at residues Asn474 and Asn478. Active-site charge relay system residues include His514 and Asp570. A glycan (N-linked (GlcNAc...) asparagine) is linked at Asn663. The active-site Charge relay system is Ser689.

This sequence belongs to the peptidase S1 family. Serine protease component of the C3 convertase, also named C4bC2b, composed of the serine protease complement C2b and complement C4b. Serine protease component of the C5 convertase, also named C4bC2bC3b, composed of the serine protease complement C2b, complement C3b, as well as complement C4b. Mg(2+) is required as a cofactor. It depends on Mn(2+) as a cofactor. In terms of processing, cleaved and activated by different proteases depending on the complement pathway to generate complement C2a and serine protease complement C2b chains. Cleaved and activated by C1S following activation by the classical complement system. Cleaved and activated by MASP2 following activation by the lectin complement system. Cleaved and activated by GZMK following activation by the GZMK complement system.

Its subcellular location is the secreted. It localises to the cell surface. It carries out the reaction Selective cleavage of Arg-|-Ser bond in complement component C3 alpha-chain to form C3a and C3b, and Arg-|-Xaa bond in complement component C5 alpha-chain to form C5a and C5b.. Its function is as follows. Precursor of the catalytic component of the C3 and C5 convertase complexes, which are part of the complement pathway, a cascade of proteins that leads to phagocytosis and breakdown of pathogens and signaling that strengthens the adaptive immune system. Component C2 is part of the classical, lectin and GZMK complement systems. Catalytic component of the complement C3 and C5 convertase complexes. Following complement activation, recruited to the surface of pathogens by complement C4b opsonin to form the C3 convertase, or C3b and C4b opsonins to form the C5 convertase. As part of the C3 convertase, cleaves and activate C3 into C3a anaphylatoxin and C3b opsonin, the next components of the complement pathways. As part of the C5 convertase, cleaves and activate C5 into C5a anaphylatoxin and C5b component of the membrane attack complex. The sequence is that of Complement C2 from Mus musculus (Mouse).